Consider the following 464-residue polypeptide: Phospho-cellobiase (464 aa).

Glu-172 serves as the catalytic Proton donor. Glu-361 serves as the catalytic Nucleophile.

This sequence belongs to the glycosyl hydrolase 1 family.

The chain is Phospho-cellobiase (casB) from Klebsiella oxytoca.